Reading from the N-terminus, the 550-residue chain is MKSLKPGIGLMCIIALYYLLPLSFRSLWQPDETRYAEISREMLASGDWIVPHFLGLRYFEKPSVGYWINNLSQWAFGHTNFAVHFGSAFSIALTALMVYWLALRLWQDRWLGLTAAAIYSSCLLVYSIGTYAVLDPMIALWLAAAMCAFWQAVQAPRGWRKGLGYLALGIACGLGFMTKGFLALAVPVLSVLPWVIAQKRWKEVFIYGPLALLGAVATSLPWVIAIARREPDFWHYFIWVEHVQRFAEDNAQHKAPFWYYLPVLLAGTLPWLGLLPGALRRAWRERQTQSGAFYLLGWVVMPLLFFSLSKGKLPTYILPSFAPLALLMARYAATCGGRALKVNGVLNLLFGLLCVITVASVLAPWGLAQHPLFVQNEVRKVLLGVLGFLVWAAVGGLTLRAPTVCWRWAALCPLGIALLVGQAIPQQVIDAKQPQSFIQTVRPQLEKSRFIFANSVGVAAGLAWELQRSDISLFELQGELAYGLSYPDAADRFIREEDFSDWLRERCKEGSVALVVLLPDGETQISHLPRADETYRRGRLVLLAYHQRRP.

11 helical membrane passes run 4-24 (LKPG…PLSF), 81-101 (FAVH…VYWL), 110-132 (WLGL…GTYA), 176-196 (FMTK…PWVI), 204-224 (VFIY…PWVI), 255-275 (APFW…LGLL), 288-308 (TQSG…FFSL), 313-333 (LPTY…RYAA), 348-368 (LLFG…WGLA), 381-401 (VLLG…TLRA), and 409-429 (AALC…QQVI).

This sequence belongs to the glycosyltransferase 83 family.

It is found in the cell inner membrane. The enzyme catalyses 4-amino-4-deoxy-alpha-L-arabinopyranosyl di-trans,octa-cis-undecaprenyl phosphate + lipid IVA = lipid IIA + di-trans,octa-cis-undecaprenyl phosphate.. Its pathway is lipopolysaccharide metabolism; 4-amino-4-deoxy-beta-L-arabinose-lipid A biosynthesis. Catalyzes the transfer of the L-Ara4N moiety of the glycolipid undecaprenyl phosphate-alpha-L-Ara4N to lipid A. The modified arabinose is attached to lipid A and is required for resistance to polymyxin and cationic antimicrobial peptides. The chain is Undecaprenyl phosphate-alpha-4-amino-4-deoxy-L-arabinose arabinosyl transferase 2 from Sodalis glossinidius (strain morsitans).